A 202-amino-acid chain; its full sequence is Peptidyl-tRNA hydrolase (202 aa).

Position 22 (tyrosine 22) interacts with tRNA. Histidine 27 acts as the Proton acceptor in catalysis. Residues phenylalanine 69, asparagine 71, and asparagine 117 each coordinate tRNA.

It belongs to the PTH family. In terms of assembly, monomer.

Its subcellular location is the cytoplasm. The catalysed reaction is an N-acyl-L-alpha-aminoacyl-tRNA + H2O = an N-acyl-L-amino acid + a tRNA + H(+). Its function is as follows. Hydrolyzes ribosome-free peptidyl-tRNAs (with 1 or more amino acids incorporated), which drop off the ribosome during protein synthesis, or as a result of ribosome stalling. Functionally, catalyzes the release of premature peptidyl moieties from peptidyl-tRNA molecules trapped in stalled 50S ribosomal subunits, and thus maintains levels of free tRNAs and 50S ribosomes. In Thiobacillus denitrificans (strain ATCC 25259 / T1), this protein is Peptidyl-tRNA hydrolase.